A 151-amino-acid chain; its full sequence is Ribosome maturation factor RimP (151 aa).

It belongs to the RimP family.

It localises to the cytoplasm. Functionally, required for maturation of 30S ribosomal subunits. This Pasteurella multocida (strain Pm70) protein is Ribosome maturation factor RimP.